The sequence spans 560 residues: Membrane protein insertase YidC (560 aa).

A helical transmembrane segment spans residues 7-27; it reads ILIVALAIVSYVMVLKWNQDY. The span at 38-56 shows a compositional bias: polar residues; sequence ASSTTTSGLPDTATGNNAA. Residues 38–76 form a disordered region; that stretch reads ASSTTTSGLPDTATGNNAAASDDIPRAASDTSAPAETPV. The next 4 helical transmembrane spans lie at 367–387, 437–457, 468–488, and 515–535; these read IVGNWGWSIIFLTMLIKGIFF, LGGCLPILVQMPVFLSLYWVL, FMLWITDLSIKDPFFILPIIM, and PIIFTFFFLWFPAGLVLYWVV.

It belongs to the OXA1/ALB3/YidC family. Type 1 subfamily. In terms of assembly, interacts with the Sec translocase complex via SecD. Specifically interacts with transmembrane segments of nascent integral membrane proteins during membrane integration.

The protein resides in the cell inner membrane. Functionally, required for the insertion and/or proper folding and/or complex formation of integral membrane proteins into the membrane. Involved in integration of membrane proteins that insert both dependently and independently of the Sec translocase complex, as well as at least some lipoproteins. Aids folding of multispanning membrane proteins. In Pseudomonas fluorescens (strain Pf0-1), this protein is Membrane protein insertase YidC.